Consider the following 500-residue polypeptide: Aldehyde dehydrogenase (500 aa).

NAD(+) is bound at residue 246–251 (GSTLVG). The active-site Proton acceptor is the glutamate 269. Cysteine 303 serves as the catalytic Nucleophile.

It belongs to the aldehyde dehydrogenase family.

The catalysed reaction is an aldehyde + NAD(+) + H2O = a carboxylate + NADH + 2 H(+). It participates in alcohol metabolism; ethanol degradation; acetate from ethanol: step 2/2. The chain is Aldehyde dehydrogenase (aldA) from Agaricus bisporus (White button mushroom).